Here is a 74-residue protein sequence, read N- to C-terminus: Translation initiation factor IF-1, chloroplastic (74 aa).

The S1-like domain maps to 1–72; the sequence is MEKQNIIEME…TKGRITYRLR (72 aa).

Belongs to the IF-1 family. Component of the 30S ribosomal translation pre-initiation complex which assembles on the 30S ribosome in the order IF-2 and IF-3, IF-1 and N-formylmethionyl-tRNA(fMet); mRNA recruitment can occur at any time during PIC assembly.

Its subcellular location is the plastid. It is found in the chloroplast. One of the essential components for the initiation of protein synthesis. Stabilizes the binding of IF-2 and IF-3 on the 30S subunit to which N-formylmethionyl-tRNA(fMet) subsequently binds. Helps modulate mRNA selection, yielding the 30S pre-initiation complex (PIC). Upon addition of the 50S ribosomal subunit IF-1, IF-2 and IF-3 are released leaving the mature 70S translation initiation complex. The protein is Translation initiation factor IF-1, chloroplastic of Chlorokybus atmophyticus (Soil alga).